The sequence spans 322 residues: Replication factor C small subunit (322 aa).

An ATP-binding site is contributed by 46–53 (GSAGIGKT).

It belongs to the activator 1 small subunits family. RfcS subfamily. Heteromultimer composed of small subunits (RfcS) and large subunits (RfcL).

Its function is as follows. Part of the RFC clamp loader complex which loads the PCNA sliding clamp onto DNA. The chain is Replication factor C small subunit from Methanoculleus marisnigri (strain ATCC 35101 / DSM 1498 / JR1).